Reading from the N-terminus, the 343-residue chain is tRNA N6-adenosine threonylcarbamoyltransferase (343 aa).

H120 and H124 together coordinate Fe cation. Residues 142-146 (VVSGG), D175, G188, D192, and N281 each bind substrate. D309 contributes to the Fe cation binding site.

The protein belongs to the KAE1 / TsaD family. Requires Fe(2+) as cofactor.

The protein resides in the cytoplasm. It carries out the reaction L-threonylcarbamoyladenylate + adenosine(37) in tRNA = N(6)-L-threonylcarbamoyladenosine(37) in tRNA + AMP + H(+). Its function is as follows. Required for the formation of a threonylcarbamoyl group on adenosine at position 37 (t(6)A37) in tRNAs that read codons beginning with adenine. Is involved in the transfer of the threonylcarbamoyl moiety of threonylcarbamoyl-AMP (TC-AMP) to the N6 group of A37, together with TsaE and TsaB. TsaD likely plays a direct catalytic role in this reaction. The chain is tRNA N6-adenosine threonylcarbamoyltransferase from Halalkalibacterium halodurans (strain ATCC BAA-125 / DSM 18197 / FERM 7344 / JCM 9153 / C-125) (Bacillus halodurans).